Here is a 151-residue protein sequence, read N- to C-terminus: Salivary C-type lectin 2 (151 aa).

An N-terminal signal peptide occupies residues 1–15; the sequence is MKLLLSFALLGLVAC. Positions 25–147 constitute a C-type lectin domain; sequence YCFPNEVATW…CTSKRRFVCE (123 aa). Cystine bridges form between cysteine 41/cysteine 146 and cysteine 118/cysteine 138.

Ca(2+) serves as cofactor. Expressed in female salivary gland. Not detected or low-level expression in female midgut and fat body.

It is found in the secreted. Functionally, salivary protein with carbohydrate-binding activity. Binds to D-mannose, D-galactose, D-glucose and maltose. Agglutinates host erythrocytes. Probably participates in mosquito innate immune responses to prevent microorganism multiplication in sugar and blood meals. In terms of biological role, (Microbial infection) Binds to the surface of and agglutinates Escherichia coli in vitro. Its function is as follows. (Microbial infection) Binds to the surface of and agglutinates Pseudomonas aeruginosa in vitro. (Microbial infection) Binds to the surface of and agglutinates Bacillus subtilis in vitro. Functionally, (Microbial infection) Agglutinates Staphylococcus aureus in vitro. In terms of biological role, (Microbial infection) Agglutinates Candida albicans in vitro. Its function is as follows. (Microbial infection) Does not affect replication of dengue virus type 2 in host cells. This chain is Salivary C-type lectin 2, found in Aedes albopictus (Asian tiger mosquito).